A 255-amino-acid polypeptide reads, in one-letter code: Triosephosphate isomerase (255 aa).

Substrate is bound at residue 9 to 11; sequence NWK. His100 serves as the catalytic Electrophile. Glu169 functions as the Proton acceptor in the catalytic mechanism. Substrate is bound by residues Gly175, Ser208, and 229–230; that span reads GG.

The protein belongs to the triosephosphate isomerase family. Homodimer.

The protein resides in the cytoplasm. The enzyme catalyses D-glyceraldehyde 3-phosphate = dihydroxyacetone phosphate. It functions in the pathway carbohydrate biosynthesis; gluconeogenesis. The protein operates within carbohydrate degradation; glycolysis; D-glyceraldehyde 3-phosphate from glycerone phosphate: step 1/1. Its function is as follows. Involved in the gluconeogenesis. Catalyzes stereospecifically the conversion of dihydroxyacetone phosphate (DHAP) to D-glyceraldehyde-3-phosphate (G3P). The polypeptide is Triosephosphate isomerase (Synechococcus sp. (strain JA-3-3Ab) (Cyanobacteria bacterium Yellowstone A-Prime)).